The chain runs to 658 residues: Glycogen debranching enzyme (658 aa).

D336 (nucleophile) is an active-site residue. The Proton donor role is filled by E371. Positions 459 to 484 (EANGEENRDGTNSNYSDNHGKEGLGG) are disordered.

Belongs to the glycosyl hydrolase 13 family.

The enzyme catalyses Hydrolysis of (1-&gt;6)-alpha-D-glucosidic linkages to branches with degrees of polymerization of three or four glucose residues in limit dextrin.. It functions in the pathway glycan degradation; glycogen degradation. Functionally, removes maltotriose and maltotetraose chains that are attached by 1,6-alpha-linkage to the limit dextrin main chain, generating a debranched limit dextrin. The sequence is that of Glycogen debranching enzyme from Salmonella enteritidis PT4 (strain P125109).